A 159-amino-acid chain; its full sequence is Transcription elongation factor GreA (159 aa).

It belongs to the GreA/GreB family.

In terms of biological role, necessary for efficient RNA polymerase transcription elongation past template-encoded arresting sites. The arresting sites in DNA have the property of trapping a certain fraction of elongating RNA polymerases that pass through, resulting in locked ternary complexes. Cleavage of the nascent transcript by cleavage factors such as GreA or GreB allows the resumption of elongation from the new 3'terminus. GreA releases sequences of 2 to 3 nucleotides. This chain is Transcription elongation factor GreA, found in Buchnera aphidicola subsp. Acyrthosiphon pisum (strain APS) (Acyrthosiphon pisum symbiotic bacterium).